Reading from the N-terminus, the 993-residue chain is Glycine dehydrogenase (decarboxylating) (993 aa).

At Lys715 the chain carries N6-(pyridoxal phosphate)lysine.

It belongs to the GcvP family. In terms of assembly, the glycine cleavage system is composed of four proteins: P, T, L and H. The cofactor is pyridoxal 5'-phosphate.

The catalysed reaction is N(6)-[(R)-lipoyl]-L-lysyl-[glycine-cleavage complex H protein] + glycine + H(+) = N(6)-[(R)-S(8)-aminomethyldihydrolipoyl]-L-lysyl-[glycine-cleavage complex H protein] + CO2. Functionally, the glycine cleavage system catalyzes the degradation of glycine. The P protein binds the alpha-amino group of glycine through its pyridoxal phosphate cofactor; CO(2) is released and the remaining methylamine moiety is then transferred to the lipoamide cofactor of the H protein. In Xylella fastidiosa (strain Temecula1 / ATCC 700964), this protein is Glycine dehydrogenase (decarboxylating).